Here is a 24-residue protein sequence, read N- to C-terminus: Unknown protein 3 (24 aa).

This Pseudotsuga menziesii (Douglas-fir) protein is Unknown protein 3.